Reading from the N-terminus, the 415-residue chain is UDP-N-acetylmuramoylalanine--D-glutamate ligase (415 aa).

Residue glycine 91–threonine 97 coordinates ATP.

The protein belongs to the MurCDEF family.

It is found in the cytoplasm. The enzyme catalyses UDP-N-acetyl-alpha-D-muramoyl-L-alanine + D-glutamate + ATP = UDP-N-acetyl-alpha-D-muramoyl-L-alanyl-D-glutamate + ADP + phosphate + H(+). Its pathway is cell wall biogenesis; peptidoglycan biosynthesis. Cell wall formation. Catalyzes the addition of glutamate to the nucleotide precursor UDP-N-acetylmuramoyl-L-alanine (UMA). This chain is UDP-N-acetylmuramoylalanine--D-glutamate ligase, found in Aquifex aeolicus (strain VF5).